The following is a 177-amino-acid chain: Nucleoside triphosphate/diphosphate phosphatase (177 aa).

Catalysis depends on Arg-23, which acts as the Proton donor. Residues Asn-87, Asp-103, Asp-105, Asp-107, Asp-120, and Glu-123 each coordinate Mg(2+).

This sequence belongs to the Ntdp family. It depends on Mg(2+) as a cofactor.

The catalysed reaction is a ribonucleoside 5'-triphosphate + H2O = a ribonucleoside 5'-diphosphate + phosphate + H(+). It carries out the reaction a ribonucleoside 5'-diphosphate + H2O = a ribonucleoside 5'-phosphate + phosphate + H(+). In terms of biological role, has nucleoside phosphatase activity towards nucleoside triphosphates and nucleoside diphosphates. The sequence is that of Nucleoside triphosphate/diphosphate phosphatase from Streptococcus equi subsp. zooepidemicus (strain MGCS10565).